The sequence spans 167 residues: Transcriptional repressor NrdR (167 aa).

A zinc finger lies at Cys3–Cys34. The region spanning Leu46–Asp136 is the ATP-cone domain. A disordered region spans residues Ala148 to Leu167.

Belongs to the NrdR family. Zn(2+) serves as cofactor.

In terms of biological role, negatively regulates transcription of bacterial ribonucleotide reductase nrd genes and operons by binding to NrdR-boxes. In Pseudarthrobacter chlorophenolicus (strain ATCC 700700 / DSM 12829 / CIP 107037 / JCM 12360 / KCTC 9906 / NCIMB 13794 / A6) (Arthrobacter chlorophenolicus), this protein is Transcriptional repressor NrdR.